A 506-amino-acid chain; its full sequence is Galactose/methyl galactoside import ATP-binding protein MglA (506 aa).

2 consecutive ABC transporter domains span residues 14-249 and 259-506; these read LEMR…VGRS and NKPG…SLHL. Residue 46–53 coordinates ATP; it reads GENGAGKS.

It belongs to the ABC transporter superfamily. Galactose/methyl galactoside importer (TC 3.A.1.2.3) family. The complex is composed of one ATP-binding protein (MglA), two transmembrane proteins (MglC) and a solute-binding protein (MglB).

It is found in the cell inner membrane. The enzyme catalyses D-galactose(out) + ATP + H2O = D-galactose(in) + ADP + phosphate + H(+). It catalyses the reaction methyl beta-D-galactoside(out) + ATP + H2O = methyl beta-D-galactoside(in) + ADP + phosphate + H(+). Its activity is regulated as follows. Stimulated 3-fold by galactose and inhibited by vanadate, N-ethylmaleimide, and 5-methoxyindole-2-carboxylic acid. Functionally, part of the ABC transporter complex MglABC involved in galactose/methyl galactoside import. Responsible for energy coupling to the transport system. The protein is Galactose/methyl galactoside import ATP-binding protein MglA of Salmonella typhimurium (strain LT2 / SGSC1412 / ATCC 700720).